The following is a 318-amino-acid chain: Thymidylate synthase (318 aa).

DUMP contacts are provided by residues arginine 25 and 180-181 (RR). Catalysis depends on cysteine 200, which acts as the Nucleophile. DUMP contacts are provided by residues 220 to 223 (RSGD), asparagine 231, and 261 to 263 (HIY). (6R)-5,10-methylene-5,6,7,8-tetrahydrofolate is bound at residue aspartate 223. Alanine 317 is a (6R)-5,10-methylene-5,6,7,8-tetrahydrofolate binding site.

It belongs to the thymidylate synthase family. Bacterial-type ThyA subfamily. In terms of assembly, homodimer.

Its subcellular location is the cytoplasm. The enzyme catalyses dUMP + (6R)-5,10-methylene-5,6,7,8-tetrahydrofolate = 7,8-dihydrofolate + dTMP. Its pathway is pyrimidine metabolism; dTTP biosynthesis. In terms of biological role, catalyzes the reductive methylation of 2'-deoxyuridine-5'-monophosphate (dUMP) to 2'-deoxythymidine-5'-monophosphate (dTMP) while utilizing 5,10-methylenetetrahydrofolate (mTHF) as the methyl donor and reductant in the reaction, yielding dihydrofolate (DHF) as a by-product. This enzymatic reaction provides an intracellular de novo source of dTMP, an essential precursor for DNA biosynthesis. The protein is Thymidylate synthase of Bacillus thuringiensis subsp. konkukian (strain 97-27).